A 316-amino-acid chain; its full sequence is Ribosomal RNA small subunit methyltransferase H (316 aa).

Residues 35–37 (AGH), D55, F84, D105, and Q112 contribute to the S-adenosyl-L-methionine site.

Belongs to the methyltransferase superfamily. RsmH family.

It localises to the cytoplasm. The catalysed reaction is cytidine(1402) in 16S rRNA + S-adenosyl-L-methionine = N(4)-methylcytidine(1402) in 16S rRNA + S-adenosyl-L-homocysteine + H(+). Functionally, specifically methylates the N4 position of cytidine in position 1402 (C1402) of 16S rRNA. In Streptococcus pneumoniae (strain Taiwan19F-14), this protein is Ribosomal RNA small subunit methyltransferase H.